Reading from the N-terminus, the 401-residue chain is Chalcone synthase 3 (401 aa).

The active site involves cysteine 168.

Belongs to the thiolase-like superfamily. Chalcone/stilbene synthases family.

The catalysed reaction is (E)-4-coumaroyl-CoA + 3 malonyl-CoA + 3 H(+) = 2',4,4',6'-tetrahydroxychalcone + 3 CO2 + 4 CoA. It functions in the pathway secondary metabolite biosynthesis; flavonoid biosynthesis. Functionally, the primary product of this enzyme is 4,2',4',6'-tetrahydroxychalcone (also termed naringenin-chalcone or chalcone) which can under specific conditions spontaneously isomerize into naringenin. This is Chalcone synthase 3 (CHS3) from Sorghum bicolor (Sorghum).